The sequence spans 172 residues: Peptide deformylase (172 aa).

Positions 91 and 133 each coordinate Fe cation. Residue glutamate 134 is part of the active site. Histidine 137 lines the Fe cation pocket.

This sequence belongs to the polypeptide deformylase family. Fe(2+) is required as a cofactor.

The enzyme catalyses N-terminal N-formyl-L-methionyl-[peptide] + H2O = N-terminal L-methionyl-[peptide] + formate. In terms of biological role, removes the formyl group from the N-terminal Met of newly synthesized proteins. Requires at least a dipeptide for an efficient rate of reaction. N-terminal L-methionine is a prerequisite for activity but the enzyme has broad specificity at other positions. This is Peptide deformylase from Vibrio campbellii (strain ATCC BAA-1116).